Consider the following 236-residue polypeptide: Thioredoxin-like 2-2, chloroplastic (236 aa).

A chloroplast-targeting transit peptide spans 1 to 82; the sequence is MAGVVRLTTT…LRRPKSQVVR (82 aa). The Thioredoxin domain occupies 83–220; it reads VKVDENVAET…QLELGITLQT (138 aa). Catalysis depends on nucleophile residues cysteine 135 and cysteine 138. An intrachain disulfide couples cysteine 135 to cysteine 138.

It belongs to the thioredoxin family.

The protein resides in the plastid. The protein localises to the chloroplast. Functionally, thiol-disulfide oxidoreductase that may participate in various redox reactions. Possesses insulin disulfide bonds reducing activity. The polypeptide is Thioredoxin-like 2-2, chloroplastic (Arabidopsis thaliana (Mouse-ear cress)).